The chain runs to 295 residues: Protoheme IX farnesyltransferase (295 aa).

The next 9 helical transmembrane spans lie at 9-29 (ITKP…FFLA), 36-56 (FGVF…GCVF), 80-100 (LVSL…GVAL), 108-128 (LAAL…SLYL), 135-155 (GTLV…CAVT), 163-183 (LTLL…IAIF), 209-229 (IMLY…GGYA), 230-250 (GLNY…MAWK), and 265-285 (FVFS…DFQV).

The protein belongs to the UbiA prenyltransferase family. Protoheme IX farnesyltransferase subfamily.

It localises to the cell inner membrane. It catalyses the reaction heme b + (2E,6E)-farnesyl diphosphate + H2O = Fe(II)-heme o + diphosphate. It participates in porphyrin-containing compound metabolism; heme O biosynthesis; heme O from protoheme: step 1/1. Converts heme B (protoheme IX) to heme O by substitution of the vinyl group on carbon 2 of heme B porphyrin ring with a hydroxyethyl farnesyl side group. The sequence is that of Protoheme IX farnesyltransferase from Pseudomonas savastanoi pv. phaseolicola (strain 1448A / Race 6) (Pseudomonas syringae pv. phaseolicola (strain 1448A / Race 6)).